We begin with the raw amino-acid sequence, 236 residues long: MTRRYWNINLKEMIEAGVHFGHGIKKWNPKMAPYISAKRKGTHIINLARTARFLSEACDLVFDAASQGKSFLIVGTKKRATDLVASAAIRARCHYVNKKWFSGMLTNWSITKTRLSQFRDLRAEEKMGKFQHLPKRDVAILKRKLSTLQRYLGGIKYMTRLPDIVIVLDQQKEYIALRECAILGIPTISLVDTNCDPDLANISIPANDDTMTSIRLILNKLVFAICEGRSLYIRNH.

This sequence belongs to the universal ribosomal protein uS2 family.

It localises to the plastid. The protein localises to the chloroplast. This Agrostis stolonifera (Creeping bentgrass) protein is Small ribosomal subunit protein uS2c (rps2).